Here is a 588-residue protein sequence, read N- to C-terminus: Succinate dehydrogenase flavoprotein subunit (588 aa).

FAD is bound by residues 14-19, 37-52, and Asp-221; these read GAGGAG and SKVF…AQGG. Tele-8alpha-FAD histidine is present on His-45. Residues His-242 and Thr-254 each contribute to the substrate site. Lys-267 carries the post-translational modification N6-acetyllysine. Arg-286 acts as the Proton acceptor in catalysis. His-354 is a binding site for substrate. Residue Glu-388 participates in FAD binding. Arg-399 contacts substrate. 404 to 405 serves as a coordination point for FAD; sequence SL.

This sequence belongs to the FAD-dependent oxidoreductase 2 family. FRD/SDH subfamily. Part of an enzyme complex containing four subunits: a flavoprotein, an iron-sulfur, cytochrome b-556, and a hydrophobic anchor protein. The complex forms trimers. FAD is required as a cofactor.

The protein localises to the cell inner membrane. The enzyme catalyses a quinone + succinate = fumarate + a quinol. Its pathway is carbohydrate metabolism; tricarboxylic acid cycle; fumarate from succinate (bacterial route): step 1/1. Functionally, two distinct, membrane-bound, FAD-containing enzymes are responsible for the catalysis of fumarate and succinate interconversion; the fumarate reductase is used in anaerobic growth, and the succinate dehydrogenase is used in aerobic growth. This Escherichia coli O157:H7 protein is Succinate dehydrogenase flavoprotein subunit (sdhA).